The following is a 602-amino-acid chain: Sensor histidine kinase AtsR (602 aa).

Helical transmembrane passes span 11–31 and 182–202; these read IIVALGSLWILGFAAWAFLLF and AIVMLGGVLGVILGALFLLLF. In terms of domain architecture, Histidine kinase spans 242–461; it reads MVSHELRTPL…EFVVTLPVEL (220 aa). His-245 carries the phosphohistidine; by autocatalysis modification. In terms of domain architecture, Response regulatory spans 484–601; the sequence is HALVVDDNEN…TLNGIVSRLR (118 aa). A 4-aspartylphosphate modification is found at Asp-533.

Its subcellular location is the cell inner membrane. The enzyme catalyses ATP + protein L-histidine = ADP + protein N-phospho-L-histidine.. Member of a two-component regulatory system involved in control of gene expression; inhibits synthesis of (at least) the polyketide antibiotic thailandamide. Its two-component partner may be BTH_I0635. This Burkholderia thailandensis (strain ATCC 700388 / DSM 13276 / CCUG 48851 / CIP 106301 / E264) protein is Sensor histidine kinase AtsR.